A 157-amino-acid chain; its full sequence is Transcription antitermination protein NusB (157 aa).

Belongs to the NusB family.

Functionally, involved in transcription antitermination. Required for transcription of ribosomal RNA (rRNA) genes. Binds specifically to the boxA antiterminator sequence of the ribosomal RNA (rrn) operons. The protein is Transcription antitermination protein NusB of Xylella fastidiosa (strain Temecula1 / ATCC 700964).